The chain runs to 99 residues: Integration host factor subunit alpha (99 aa).

This sequence belongs to the bacterial histone-like protein family. As to quaternary structure, heterodimer of an alpha and a beta chain.

This protein is one of the two subunits of integration host factor, a specific DNA-binding protein that functions in genetic recombination as well as in transcriptional and translational control. In Xanthomonas axonopodis pv. citri (strain 306), this protein is Integration host factor subunit alpha (ihfA).